A 265-amino-acid chain; its full sequence is MNKSDGNESFALDSLPENIRYPFGKRELEILEKQLDRIVLIYQVDTTYHSALKDIKDQKIISLLVEPSFYGRHHPTSILVVATCNGTYIFDIKALGLIFLELAKILEADQPRKVIHYSHRIADHLLHRQRISLGGIFDTFVAVCLSSNTRIPYTLPEAISLVFGLPMEKVTGGCESQRNFTARPLTHSQMRYLAKLVQLQHIMHDHLNYSHIFCAEVYRISLEFSHSYYGLRSCDVAINMAPASSFGFQLLDSFCKKADKELEQI.

The 3'-5' exonuclease domain occupies 32 to 82; it reads EKQLDRIVLIYQVDTTYHSALKDIKDQKIISLLVEPSFYGRHHPTSILVVA.

The protein belongs to the EXD1 family. In terms of assembly, homodimer.

RNA-binding protein. Inactive exonuclease. This chain is Protein Exd1 homolog, found in Drosophila melanogaster (Fruit fly).